A 195-amino-acid chain; its full sequence is Protein GrpE (195 aa).

Over residues 1–20 (MSSKEQKTPDEQVLDQKEAA) the composition is skewed to basic and acidic residues. The segment at 1 to 40 (MSSKEQKTPDEQVLDQKEAAKGQQADAAPETADVADPRDE) is disordered.

Belongs to the GrpE family. As to quaternary structure, homodimer.

It is found in the cytoplasm. Its function is as follows. Participates actively in the response to hyperosmotic and heat shock by preventing the aggregation of stress-denatured proteins, in association with DnaK and GrpE. It is the nucleotide exchange factor for DnaK and may function as a thermosensor. Unfolded proteins bind initially to DnaJ; upon interaction with the DnaJ-bound protein, DnaK hydrolyzes its bound ATP, resulting in the formation of a stable complex. GrpE releases ADP from DnaK; ATP binding to DnaK triggers the release of the substrate protein, thus completing the reaction cycle. Several rounds of ATP-dependent interactions between DnaJ, DnaK and GrpE are required for fully efficient folding. This Pectobacterium atrosepticum (strain SCRI 1043 / ATCC BAA-672) (Erwinia carotovora subsp. atroseptica) protein is Protein GrpE.